A 64-amino-acid polypeptide reads, in one-letter code: Cytochrome c oxidase subunit 5C-2 (64 aa).

A helical transmembrane segment spans residues S15 to W34.

This sequence belongs to the cytochrome c oxidase subunit 5C family.

Its subcellular location is the mitochondrion inner membrane. Functionally, this protein is one of the nuclear-coded polypeptide chains of cytochrome c oxidase, the terminal oxidase in mitochondrial electron transport. The chain is Cytochrome c oxidase subunit 5C-2 from Arabidopsis thaliana (Mouse-ear cress).